A 156-amino-acid chain; its full sequence is V-type sodium ATPase subunit K (156 aa).

The next 4 membrane-spanning stretches (helical) occupy residues 11-31 (GMVFAVLAMATATIFSGIGSA), 60-80 (LLPGTQGLYGFVIAFLIFINL), 89-109 (GLNFLGASLPIAFTGLFSGIA), and 132-152 (IIFAAMVETYAILGFVISFLL).

The protein belongs to the V-ATPase proteolipid subunit family. In terms of processing, the N-terminus is blocked.

The protein localises to the cell membrane. Functionally, involved in ATP-driven sodium extrusion. The sequence is that of V-type sodium ATPase subunit K (ntpK) from Enterococcus hirae (strain ATCC 9790 / DSM 20160 / JCM 8729 / LMG 6399 / NBRC 3181 / NCIMB 6459 / NCDO 1258 / NCTC 12367 / WDCM 00089 / R).